Reading from the N-terminus, the 516-residue chain is GMP synthase [glutamine-hydrolyzing] (516 aa).

One can recognise a Glutamine amidotransferase type-1 domain in the interval 8–198 (KILILDFGSQ…VVNICGCDTL (191 aa)). C84 (nucleophile) is an active-site residue. Active-site residues include H172 and E174. The GMPS ATP-PPase domain maps to 199 to 391 (WNIENIIEND…LGLPYNMLYR (193 aa)). ATP is bound at residue 226–232 (SGGVDSS).

In terms of assembly, homodimer.

It carries out the reaction XMP + L-glutamine + ATP + H2O = GMP + L-glutamate + AMP + diphosphate + 2 H(+). It functions in the pathway purine metabolism; GMP biosynthesis; GMP from XMP (L-Gln route): step 1/1. Catalyzes the synthesis of GMP from XMP. The sequence is that of GMP synthase [glutamine-hydrolyzing] from Francisella tularensis subsp. mediasiatica (strain FSC147).